A 544-amino-acid chain; its full sequence is Putative glycerol-3-phosphate transporter 4 (544 aa).

The next 6 membrane-spanning stretches (helical) occupy residues 28–47 (TFRYAILFITFIAYACYHAS), 121–141 (VAFLACYSIGMYVAGHLGDSL), 156–176 (FFVGLFGMGYFWNIHAFWFFL), 181–201 (AAGLFQATGWPSVVAVVGNWF), 218–238 (SVGNICGSLIAAGVLEYGWGW), and 240–260 (FIAPGFVMSLGGVLVYLFLAA). The segment at 281–313 (KRDVEEEEEEVEEDLGTDVEGDGEGSSGSGSGY) is disordered. Acidic residues predominate over residues 285–303 (EEEEEEVEEDLGTDVEGDG). The next 7 membrane-spanning stretches (helical) occupy residues 319–339 (VGLLQACMIPGVIPFALCLFF), 342–362 (LVAYTFLYWLPFYLSQTTIGG), 371–391 (GNLSTLFDVGGIVGGILCGYI), 402–422 (AAAFMYAAIPAMLVYHSYGGV), 428–448 (ILLMMVAGLFVNGPYALITTA), 471–491 (AIIDGTGSAGAALGPLLTGFL), and 494–514 (LGWQAVFYMLVVGALCAGLLL).

This sequence belongs to the major facilitator superfamily. Organophosphate:Pi antiporter (OPA) (TC 2.A.1.4) family.

The protein resides in the membrane. This Arabidopsis thaliana (Mouse-ear cress) protein is Putative glycerol-3-phosphate transporter 4.